The sequence spans 305 residues: Probable branched-chain-amino-acid aminotransferase (305 aa).

Lys156 is modified (N6-(pyridoxal phosphate)lysine).

The protein belongs to the class-IV pyridoxal-phosphate-dependent aminotransferase family. Requires pyridoxal 5'-phosphate as cofactor.

It carries out the reaction L-leucine + 2-oxoglutarate = 4-methyl-2-oxopentanoate + L-glutamate. It catalyses the reaction L-isoleucine + 2-oxoglutarate = (S)-3-methyl-2-oxopentanoate + L-glutamate. The catalysed reaction is L-valine + 2-oxoglutarate = 3-methyl-2-oxobutanoate + L-glutamate. Its pathway is amino-acid biosynthesis; L-isoleucine biosynthesis; L-isoleucine from 2-oxobutanoate: step 4/4. It participates in amino-acid biosynthesis; L-leucine biosynthesis; L-leucine from 3-methyl-2-oxobutanoate: step 4/4. It functions in the pathway amino-acid biosynthesis; L-valine biosynthesis; L-valine from pyruvate: step 4/4. Acts on leucine, isoleucine and valine. In Synechocystis sp. (strain ATCC 27184 / PCC 6803 / Kazusa), this protein is Probable branched-chain-amino-acid aminotransferase (ilvE).